The sequence spans 23 residues: Potassium channel toxin kappa-KTx 1.2 (23 aa).

2 disulfides stabilise this stretch: Cys-4–Cys-22 and Cys-8–Cys-18. Cys-22 is subject to Cysteine amide.

This sequence belongs to the short scorpion toxin superfamily. Potassium channel inhibitor kappa-KTx family. Kappa-KTx 1 subfamily. Post-translationally, the two disulfide isomers globular (C1-C3, C2-C4) and beads (C1-C2, C3-C4) do not show activity on Kv10.1/KCNH1/EAG1. As to expression, expressed by the venom gland.

It localises to the secreted. In terms of biological role, shows weak blocking activity on voltage-gated potassium channels Kv10.1/KCNH1/EAG1 (IC(50)=26 uM), Kv1.2/KCNA2 (Kd=150 uM), Kv1.3/KCNA3 (Kd=40 uM), Kv1.6/KCNA3 (16.6% inhibition at 40 uM toxin). The block is dose-dependent, voltage-independent, and reversible. Also shows a weak inhibitory activity on the plant pathogen F.culmorum growth (IC(50)=18.8-37.7 uM). The sequence is that of Potassium channel toxin kappa-KTx 1.2 from Chersonesometrus fulvipes (Indian black scorpion).